The sequence spans 288 residues: Serine/threonine-protein acetyltransferase YopJ (288 aa).

Residues His109 and Glu128 contribute to the active site. Residue His109 coordinates CoA. Position 167-168 (167-168 (RS)) interacts with CoA. Cys172 is an active-site residue. Residues 182–185 (KLYI) and 224–225 (KH) each bind 1D-myo-inositol hexakisphosphate. 227-230 (QGKK) contributes to the CoA binding site. Arg257 contributes to the 1D-myo-inositol hexakisphosphate binding site. 266 to 270 (DGKEL) lines the CoA pocket.

Belongs to the acetyltransferase YopJ family. It depends on 1D-myo-inositol hexakisphosphate as a cofactor.

It localises to the secreted. The enzyme catalyses L-threonyl-[protein] + acetyl-CoA = O-acetyl-L-threonyl-[protein] + CoA. It carries out the reaction L-seryl-[protein] + acetyl-CoA = O-acetyl-L-seryl-[protein] + CoA. 1D-myo-inositol hexakisphosphate activates protein-acetyltransferase activity via an allosteric mechanism: 1D-myo-inositol hexakisphosphate-binding induces a conformational rearrangement that stimulates the interaction with acetyl-CoA. Its function is as follows. Serine/threonine-protein acetyltransferase translocated into infected cells, which inhibits the host immune response and induces cell death by mediating acetylation of target proteins. Inhibits the MAPK and NF-kappa-B signaling pathways by acetylating protein-kinases such as MAP2K1, MAP2K6, MAP3K7/TAK1 and I-kappa-B kinase (CHUK/IKKA and IKBKB) on serine and threonine residues critical for their activation by phosphorylation, thereby preventing protein-kinase activation. Promotes pyroptosis, a programmed cell death, in host cells by mediating acetylation of MAP3K7/TAK1: MAP3K7/TAK1 inactivation triggers activation of caspase-8 (CASP8), followed by CASP8-dependent cleavage of gasdermin-D (GSDMD) and induction of pyroptosis. Also able to induce intestinal barrier dysfunction by acetylating and inhibiting host protein-kinases RIPK2/RICK and MAP3K7/TAK1, thereby promoting cell death. This is Serine/threonine-protein acetyltransferase YopJ from Yersinia pseudotuberculosis serotype I (strain IP32953).